The sequence spans 291 residues: 4-hydroxy-tetrahydrodipicolinate synthase (291 aa).

Pyruvate is bound at residue Thr44. Tyr132 acts as the Proton donor/acceptor in catalysis. The active-site Schiff-base intermediate with substrate is the Lys160. Ile202 is a pyruvate binding site.

It belongs to the DapA family. Homotetramer; dimer of dimers.

It is found in the cytoplasm. The enzyme catalyses L-aspartate 4-semialdehyde + pyruvate = (2S,4S)-4-hydroxy-2,3,4,5-tetrahydrodipicolinate + H2O + H(+). The protein operates within amino-acid biosynthesis; L-lysine biosynthesis via DAP pathway; (S)-tetrahydrodipicolinate from L-aspartate: step 3/4. Its function is as follows. Catalyzes the condensation of (S)-aspartate-beta-semialdehyde [(S)-ASA] and pyruvate to 4-hydroxy-tetrahydrodipicolinate (HTPA). The protein is 4-hydroxy-tetrahydrodipicolinate synthase of Sphingopyxis alaskensis (strain DSM 13593 / LMG 18877 / RB2256) (Sphingomonas alaskensis).